Here is a 493-residue protein sequence, read N- to C-terminus: MHTLVFLSTRQVLQCQSAACQALPLLPRELFPLLFKVAFMDKKTVVLRELVHTWPFPLLSFQQLLQECAHCSRALLQERPSTESMQAVILGLTARLHTPETEPGTQPLCRKHTLRVLDMTGLLDDGVEQDPGTMSMWDCTAAVARTCIEQQQGRTAEPGQAPVPVEVRVDLRVNRASYAFLREALRSSVGSPLRLCCRDLRAEDLPMRNTVALLQLLDAGCLRRVDLRFNNLGLRGLSVIIPHVARFQHLASLRLHYVHGDSRQPSVDGEDNFRYFLAQMGRFTCLRELSMGSSLLSGRLDQLLSTLQSPLESLELAFCALLPEDLRFLARSSHAVHLKKLDLSGNDLSGSQLEPFQGLLQAAAATLLHLELTECQLADTQLLATLPVLTRCASLRYLGLYGNPLSVAGLRELLRDSVVQAELRTVVHPFPVDCYEGLPWPPPASVLLEASINEEKFARVEAELHQLLLASGRAHVLWTTDIYGRLAADYFSL.

One copy of the LRR 1; degenerate repeat lies at 111–146 (KHTLRVLDMTGLLDDGVEQDPGTMSMWDCTAAVART). The LRR 2; degenerate repeat unit spans residues 194-218 (RLCCRDLRAEDLPMRNTVALLQLLD). An LRR 3; degenerate repeat occupies 219 to 246 (AGCLRRVDLRFNNLGLRGLSVIIPHVAR). Residues 247–282 (FQHLASLRLHYVHGDSRQPSVDGEDNFRYFLAQMGR) form an LRR 4; degenerate repeat. LRR repeat units lie at residues 283 to 307 (FTCLRELSMGSSLLSGRLDQLLSTL), 308 to 339 (QSPLESLELAFCALLPEDLRFLARSSHAVHLK), 340 to 360 (KLDLSGNDLSGSQLEPFQGLL), 364 to 391 (AATLLHLELTECQLADTQLLATLPVLTR), and 392 to 416 (CASLRYLGLYGNPLSVAGLRELLRD).

The protein belongs to the PRAME family. LRRC14 subfamily. In terms of assembly, interacts with IKBKB; disrupts IKBKB-IKBKG interaction preventing I-kappa-B-kinase (IKK) core complex formation and leading to a decrease of IKBKB phosphorylation and NF-kappaB activation. Interacts with CHUK.

It is found in the cytoplasm. Negatively regulates Toll-like receptor-mediated NF-kappa-B signaling by disrupting IKK core complex formation through interaction with IKBKB. The chain is Leucine-rich repeat-containing protein 14 from Bos taurus (Bovine).